Reading from the N-terminus, the 208-residue chain is Uracil phosphoribosyltransferase (208 aa).

5-phospho-alpha-D-ribose 1-diphosphate is bound by residues R78, R103, and 130 to 138 (DPMLATGGT). Residues I193 and 198-200 (GDA) each bind uracil. D199 serves as a coordination point for 5-phospho-alpha-D-ribose 1-diphosphate.

It belongs to the UPRTase family. Requires Mg(2+) as cofactor.

It carries out the reaction UMP + diphosphate = 5-phospho-alpha-D-ribose 1-diphosphate + uracil. It functions in the pathway pyrimidine metabolism; UMP biosynthesis via salvage pathway; UMP from uracil: step 1/1. With respect to regulation, allosterically activated by GTP. Functionally, catalyzes the conversion of uracil and 5-phospho-alpha-D-ribose 1-diphosphate (PRPP) to UMP and diphosphate. In Oleidesulfovibrio alaskensis (strain ATCC BAA-1058 / DSM 17464 / G20) (Desulfovibrio alaskensis), this protein is Uracil phosphoribosyltransferase.